The following is a 122-amino-acid chain: Large ribosomal subunit protein uL18 (122 aa).

Belongs to the universal ribosomal protein uL18 family. As to quaternary structure, part of the 50S ribosomal subunit; part of the 5S rRNA/L5/L18/L25 subcomplex. Contacts the 5S and 23S rRNAs.

This is one of the proteins that bind and probably mediate the attachment of the 5S RNA into the large ribosomal subunit, where it forms part of the central protuberance. The protein is Large ribosomal subunit protein uL18 of Geobacter sp. (strain M21).